The chain runs to 247 residues: ATP synthase subunit a, chloroplastic (247 aa).

5 helical membrane-spanning segments follow: residues 38–58, 95–115, 134–154, 199–219, and 220–240; these read QVLI…IIAV, VPFI…GALL, INTT…AGLT, LVVV…VMFL, and GLFT…AYIG.

The protein belongs to the ATPase A chain family. As to quaternary structure, F-type ATPases have 2 components, CF(1) - the catalytic core - and CF(0) - the membrane proton channel. CF(1) has five subunits: alpha(3), beta(3), gamma(1), delta(1), epsilon(1). CF(0) has four main subunits: a, b, b' and c.

The protein resides in the plastid. The protein localises to the chloroplast thylakoid membrane. In terms of biological role, key component of the proton channel; it plays a direct role in the translocation of protons across the membrane. This is ATP synthase subunit a, chloroplastic from Carica papaya (Papaya).